The primary structure comprises 78 residues: Acyl carrier protein (78 aa).

The Carrier domain maps to 2 to 77; sequence STIEERVKKI…AAIDFINANQ (76 aa). S37 is subject to O-(pantetheine 4'-phosphoryl)serine.

It belongs to the acyl carrier protein (ACP) family. In terms of processing, 4'-phosphopantetheine is transferred from CoA to a specific serine of apo-ACP by AcpS. This modification is essential for activity because fatty acids are bound in thioester linkage to the sulfhydryl of the prosthetic group.

It localises to the cytoplasm. It functions in the pathway lipid metabolism; fatty acid biosynthesis. Carrier of the growing fatty acid chain in fatty acid biosynthesis. The protein is Acyl carrier protein of Yersinia pseudotuberculosis serotype O:1b (strain IP 31758).